We begin with the raw amino-acid sequence, 900 residues long: Alanine--tRNA ligase (900 aa).

Zn(2+) contacts are provided by histidine 580, histidine 584, cysteine 683, and histidine 687.

The protein belongs to the class-II aminoacyl-tRNA synthetase family. Requires Zn(2+) as cofactor.

It localises to the cytoplasm. It catalyses the reaction tRNA(Ala) + L-alanine + ATP = L-alanyl-tRNA(Ala) + AMP + diphosphate. Its function is as follows. Catalyzes the attachment of alanine to tRNA(Ala) in a two-step reaction: alanine is first activated by ATP to form Ala-AMP and then transferred to the acceptor end of tRNA(Ala). Also edits incorrectly charged Ser-tRNA(Ala) and Gly-tRNA(Ala) via its editing domain. The polypeptide is Alanine--tRNA ligase (Mycolicibacterium paratuberculosis (strain ATCC BAA-968 / K-10) (Mycobacterium paratuberculosis)).